The sequence spans 479 residues: Anaerobic nitric oxide reductase flavorubredoxin (479 aa).

Residues leucine 30 to isoleucine 210 are zinc metallo-hydrolase. Fe cation contacts are provided by histidine 79, glutamate 81, aspartate 83, histidine 147, aspartate 166, and histidine 227. Residues isoleucine 254–alanine 393 form the Flavodoxin-like domain. Residues threonine 260–asparagine 264 and alanine 342–leucine 369 contribute to the FMN site. The Rubredoxin-like domain maps to glycine 423–leucine 474. 4 residues coordinate Fe cation: cysteine 428, cysteine 431, cysteine 461, and cysteine 464.

The protein in the N-terminal section; belongs to the zinc metallo-hydrolase group 3 family. In terms of assembly, homotetramer. Fe cation serves as cofactor. It depends on FMN as a cofactor.

The protein resides in the cytoplasm. It functions in the pathway nitrogen metabolism; nitric oxide reduction. Functionally, anaerobic nitric oxide reductase; uses NADH to detoxify nitric oxide (NO), protecting several 4Fe-4S NO-sensitive enzymes. Has at least 2 reductase partners, only one of which (NorW, flavorubredoxin reductase) has been identified. NO probably binds to the di-iron center; electrons enter from the NorW at rubredoxin and are transferred sequentially to the FMN center and the di-iron center. Also able to function as an aerobic oxygen reductase. The chain is Anaerobic nitric oxide reductase flavorubredoxin from Salmonella choleraesuis (strain SC-B67).